A 306-amino-acid chain; its full sequence is Lymphotoxin-beta (306 aa).

Residues 1–27 (MGTRGLQGLGGRPQGRGCLLLAVAGAT) are Cytoplasmic-facing. The chain crosses the membrane as a helical; Signal-anchor for type II membrane protein span at residues 28-48 (SLVTLLLAVPITVLAVLALVP). Over 49–306 (QDQGRRVEKI…KTFFGAVMVG (258 aa)) the chain is Extracellular. Disordered regions lie at residues 63–112 (AQAQ…GPVA) and 127–151 (PAAD…DLNP). Residues 74–85 (PSCILPSPSSLS) show a composition bias toward low complexity. Positions 95 to 112 (QRSNASRNLASTSQGPVA) are enriched in polar residues. Residue Asn98 is glycosylated (N-linked (GlcNAc...) asparagine). A THD domain is found at 154 to 305 (PAAHLIGAWM…GKTFFGAVMV (152 aa)). N-linked (GlcNAc...) asparagine glycosylation is present at Asn284.

This sequence belongs to the tumor necrosis factor family. As to quaternary structure, heterotrimer of either two LTB and one LTA subunits or (less prevalent) two LTA and one LTB subunits.

The protein resides in the membrane. Cytokine that binds to LTBR/TNFRSF3. May play a specific role in immune response regulation. Provides the membrane anchor for the attachment of the heterotrimeric complex to the cell surface. This Mus musculus (Mouse) protein is Lymphotoxin-beta (Ltb).